The chain runs to 165 residues: Large ribosomal subunit protein uL15 (165 aa).

The disordered stretch occupies residues 1-44; sequence MSLNQLKAPRGANRAKKRVGRGQGSGLGKTAGRGGKGQKARSGN. Over residues 21-37 the composition is skewed to gly residues; it reads RGQGSGLGKTAGRGGKG.

The protein belongs to the universal ribosomal protein uL15 family. Part of the 50S ribosomal subunit.

In terms of biological role, binds to the 23S rRNA. In Anaeromyxobacter dehalogenans (strain 2CP-C), this protein is Large ribosomal subunit protein uL15.